A 472-amino-acid polypeptide reads, in one-letter code: Sad1-interacting factor 3 (472 aa).

Disordered regions lie at residues 1-47 (MSTK…PRFG) and 197-223 (SSGP…DKPD). The Lumenal segment spans residues 1-443 (MSTKDKLNLP…KSSADRKMNS (443 aa)). Polar residues predominate over residues 30-40 (NSESTRITPQH). Serine 42 carries the post-translational modification Phosphoserine. Residues 444–464 (ITWIIIILISLFVIIFTLEVI) form a helical membrane-spanning segment. Over 465–472 (LRLRWAHR) the chain is Cytoplasmic.

This sequence belongs to the RMD1/sif2 family. As to quaternary structure, interacts with sad1.

It is found in the nucleus membrane. The protein is Sad1-interacting factor 3 (sif3) of Schizosaccharomyces pombe (strain 972 / ATCC 24843) (Fission yeast).